Here is a 319-residue protein sequence, read N- to C-terminus: Mitochondrial fission regulator 1-like (319 aa).

The tract at residues 1 to 35 (MASLGAGAEPESVLFGKDGTEACESPEGRRSGRRK) is disordered.

The protein belongs to the MTFR1 family.

The protein localises to the mitochondrion outer membrane. Functionally, mitochondrial protein required for adaptation of miochondrial dynamics to metabolic changes. Regulates mitochondrial morphology at steady state and mediates AMPK-dependent stress-induced mitochondrial fragmentation via the control of OPA1 levels. In Xenopus tropicalis (Western clawed frog), this protein is Mitochondrial fission regulator 1-like (mtfr1l).